A 492-amino-acid polypeptide reads, in one-letter code: MDPYKYRPSSAYNTPFCTTNSGAPIWNNTAVMSVGERGPILLEDYQLIEKIATFTRERIPERVVHRRGASAKGFFEVTHDISNLTCADFLRAPGVQTPVIVRFSTVIHERGSPETLRDPRGFAVKFYTREGNFDLVGNNFPVFFVRDAMQFPDVIRAFKPNPKSHLQEPWRYLDFCSYHPESLLSFAWFYDDVGIPINYRHMEGFGVQAYSLINKSGKARLVKFHWKPTCGVKSMMEEEAIRIGGTNHSHATQDLYESIAAGNFPEWRLYIQTIDYEDQNKYDFEPLDTTITWPEDVVPLQPVGRLVLNKNIDNFFAENEMLAFSMSLVPGIHYSDDKMLQARSFAYADTQRHRLGPNYLQLPVNAPKCPHHNNHHEGFMNFMHRDEEVNYFPSRYDPCRHAEKFPMPPNVLTGKRERCVIPKENNNFKQAGDRYRSWAPDRQDRFVKRFVEALSDPRVTDEVRNIWISYWSQADRSLGQKIASRLNVRPNI.

Active-site residues include histidine 65 and asparagine 138. Tyrosine 347 contributes to the heme binding site.

It belongs to the catalase family. In terms of assembly, homotetramer. Heme serves as cofactor. As to expression, abundant in green cotyledons, etiolated cotyledons, green hypocotyl and root, but not in young leaf.

It localises to the peroxisome. It carries out the reaction 2 H2O2 = O2 + 2 H2O. Occurs in almost all aerobically respiring organisms and serves to protect cells from the toxic effects of hydrogen peroxide. This is Catalase isozyme 3 (CAT3) from Cucurbita pepo (Vegetable marrow).